Consider the following 307-residue polypeptide: Aspartate carbamoyltransferase catalytic subunit (307 aa).

Arg54 and Thr55 together coordinate carbamoyl phosphate. Lys83 is an L-aspartate binding site. Positions 104, 132, and 135 each coordinate carbamoyl phosphate. Residues Arg165 and Arg228 each coordinate L-aspartate. Carbamoyl phosphate is bound by residues Leu267 and Pro268.

This sequence belongs to the aspartate/ornithine carbamoyltransferase superfamily. ATCase family. As to quaternary structure, heterododecamer (2C3:3R2) of six catalytic PyrB chains organized as two trimers (C3), and six regulatory PyrI chains organized as three dimers (R2).

It catalyses the reaction carbamoyl phosphate + L-aspartate = N-carbamoyl-L-aspartate + phosphate + H(+). It participates in pyrimidine metabolism; UMP biosynthesis via de novo pathway; (S)-dihydroorotate from bicarbonate: step 2/3. Functionally, catalyzes the condensation of carbamoyl phosphate and aspartate to form carbamoyl aspartate and inorganic phosphate, the committed step in the de novo pyrimidine nucleotide biosynthesis pathway. The polypeptide is Aspartate carbamoyltransferase catalytic subunit (Clostridium acetobutylicum (strain ATCC 824 / DSM 792 / JCM 1419 / IAM 19013 / LMG 5710 / NBRC 13948 / NRRL B-527 / VKM B-1787 / 2291 / W)).